The following is a 947-amino-acid chain: Cell adhesion molecule CEACAM5 (947 aa).

The N-terminal stretch at 1–34 (MEASSVLPCKWCTHLQGLLLTASFLTCCHLPTTA) is a signal peptide. 7 Ig-like V-type domains span residues 35 to 132 (QITI…EIVS), 166 to 259 (SEGG…VQLY), 270 to 378 (PLQV…LHVN), 392 to 498 (RLSI…LQLD), 509 to 615 (QVKI…LHVN), 642 to 733 (GESV…VQLQ), and 746 to 851 (DQLI…VQVH). N-linked (GlcNAc...) asparagine glycans are attached at residues Asn-57, Asn-103, Asn-110, Asn-207, Asn-224, Asn-341, Asn-461, Asn-472, Asn-578, Asn-698, Asn-709, Asn-816, and Asn-823. One can recognise an Ig-like C2-type 1 domain in the interval 859-943 (PFVRVTDTTV…SKSSLPVRLA (85 aa)). A disulfide bridge links Cys-878 with Cys-926.

Belongs to the immunoglobulin superfamily. CEA family. Homodimer.

The protein localises to the cell membrane. It is found in the apical cell membrane. The protein resides in the cell surface. Cell surface glycoprotein that plays a role in cell adhesion, intracellular signaling and tumor progression. Mediates homophilic and heterophilic cell adhesion with other carcinoembryonic antigen-related cell adhesion molecules, such as CEACAM6. Plays a role as an oncogene by promoting tumor progression; induces resistance to anoikis of colorectal carcinoma cells. This is Cell adhesion molecule CEACAM5 from Mus musculus (Mouse).